The primary structure comprises 260 residues: Cytochrome c oxidase subunit 3 (260 aa).

The next 6 membrane-spanning stretches (helical) occupy residues 30-50 (LILW…VLLV), 81-101 (GMIL…WAFF), 126-146 (FLVP…VTWA), 158-178 (AIQS…LQAW), 196-216 (FFVA…FLAV), and 239-259 (WYWH…YWWG).

It belongs to the cytochrome c oxidase subunit 3 family. In terms of assembly, component of the cytochrome c oxidase (complex IV, CIV), a multisubunit enzyme composed of a catalytic core of 3 subunits and several supernumerary subunits. The complex exists as a monomer or a dimer and forms supercomplexes (SCs) in the inner mitochondrial membrane with ubiquinol-cytochrome c oxidoreductase (cytochrome b-c1 complex, complex III, CIII).

Its subcellular location is the mitochondrion inner membrane. The catalysed reaction is 4 Fe(II)-[cytochrome c] + O2 + 8 H(+)(in) = 4 Fe(III)-[cytochrome c] + 2 H2O + 4 H(+)(out). In terms of biological role, component of the cytochrome c oxidase, the last enzyme in the mitochondrial electron transport chain which drives oxidative phosphorylation. The respiratory chain contains 3 multisubunit complexes succinate dehydrogenase (complex II, CII), ubiquinol-cytochrome c oxidoreductase (cytochrome b-c1 complex, complex III, CIII) and cytochrome c oxidase (complex IV, CIV), that cooperate to transfer electrons derived from NADH and succinate to molecular oxygen, creating an electrochemical gradient over the inner membrane that drives transmembrane transport and the ATP synthase. Cytochrome c oxidase is the component of the respiratory chain that catalyzes the reduction of oxygen to water. Electrons originating from reduced cytochrome c in the intermembrane space (IMS) are transferred via the dinuclear copper A center (CU(A)) of subunit 2 and heme A of subunit 1 to the active site in subunit 1, a binuclear center (BNC) formed by heme A3 and copper B (CU(B)). The BNC reduces molecular oxygen to 2 water molecules using 4 electrons from cytochrome c in the IMS and 4 protons from the mitochondrial matrix. The chain is Cytochrome c oxidase subunit 3 (COIII) from Pisaster ochraceus (Ochre sea star).